Reading from the N-terminus, the 207-residue chain is N-(5'-phosphoribosyl)anthranilate isomerase (207 aa).

The protein belongs to the TrpF family.

The catalysed reaction is N-(5-phospho-beta-D-ribosyl)anthranilate = 1-(2-carboxyphenylamino)-1-deoxy-D-ribulose 5-phosphate. Its pathway is amino-acid biosynthesis; L-tryptophan biosynthesis; L-tryptophan from chorismate: step 3/5. This is N-(5'-phosphoribosyl)anthranilate isomerase from Stutzerimonas stutzeri (strain A1501) (Pseudomonas stutzeri).